A 225-amino-acid polypeptide reads, in one-letter code: UPF0758 protein Shewmr7_0359 (225 aa).

The MPN domain occupies 102-224 (VLTNPDLTRD…IVSFAERGWI (123 aa)). Residues His-173, His-175, and Asp-186 each contribute to the Zn(2+) site. A JAMM motif motif is present at residues 173-186 (HNHPSGIAEPSQAD).

It belongs to the UPF0758 family.

This Shewanella sp. (strain MR-7) protein is UPF0758 protein Shewmr7_0359.